A 686-amino-acid chain; its full sequence is Glycogenin (686 aa).

Leu13, Asn16, Tyr19, and Arg82 together coordinate UDP. UDP-alpha-D-glucose is bound by residues Leu13, Asn16, Tyr19, Arg82, Lys91, Asp107, Ala108, Asp109, Asn139, Thr140, Asp166, Asp169, and Gln170. Residues Asp107, Ala108, and Asp109 each coordinate UDP. Residue Asp107 participates in Mn(2+) binding. Mn(2+) is bound at residue Asp109. 2 O-linked (Glc...) tyrosine glycosylation sites follow: Tyr196 and Tyr198. Residues His213, Gly216, and Lys219 each contribute to the UDP site. Mn(2+) is bound at residue His213. UDP-alpha-D-glucose contacts are provided by Gly216 and Lys219. 4 disordered regions span residues 264 to 331 (VKGE…ANFP), 381 to 444 (PEPT…RGNA), 460 to 533 (KHRR…GVPA), and 603 to 686 (KPLR…VLET). Composition is skewed to low complexity over residues 285–308 (SSQS…YTSH) and 398–416 (SAAS…ASPT). Positions 307–686 (SHGASWDASR…TEEERDVLET (380 aa)) are not required for catalytic activity. 2 stretches are compositionally biased toward polar residues: residues 424–442 (VTPT…TTRG) and 471–483 (AATS…GRAQ). Acidic residues predominate over residues 677 to 686 (TEEERDVLET).

This sequence belongs to the glycosyltransferase 8 family. Glycogenin subfamily. In terms of assembly, interacts with glycogen synthase gsy-1; the interaction is direct. Requires Mn(2+) as cofactor.

It is found in the cytoplasm. The protein resides in the vacuole. The enzyme catalyses L-tyrosyl-[glycogenin] + UDP-alpha-D-glucose = alpha-D-glucosyl-L-tyrosyl-[glycogenin] + UDP + H(+). It carries out the reaction [1,4-alpha-D-glucosyl](n)-L-tyrosyl-[glycogenin] + UDP-alpha-D-glucose = [1,4-alpha-D-glucosyl](n+1)-L-tyrosyl-[glycogenin] + UDP + H(+). Self-glucosylating initiator of glycogen synthesis. It catalyzes the formation of a short alpha (1,4)-glucosyl chain covalently attached via a glucose 1-O-tyrosyl linkage to internal tyrosine residues and these chains act as primers for the elongation reaction catalyzed by glycogen synthase. This chain is Glycogenin, found in Neurospora crassa (strain ATCC 24698 / 74-OR23-1A / CBS 708.71 / DSM 1257 / FGSC 987).